The following is a 273-amino-acid chain: MIKVAVTGAAGRMGSGIIRKITQQDDMEVVAAIEIPNSPLAGVDAGIQAGAGELGVKIVGAEKLEETLKESKADVLVDFTIAHAAVETVKKATACGVNVVVGTTGFTDEQMAENIKNVKDNDVKAVISSNMSIGVNVFFNTLKKLTPILNDFDIEIIEAHHNQKKDAPSGTAMTAFEVIANELDRDPEEVGVYGRQGMVGKRTKEEIGLHAIRGGDIVGDHTVMFIGDGERIEFTHRAHTREVFIAGVIRAIRYIPDAESGIVSSMNDVLGLE.

NAD(+)-binding positions include 8–13, Glu34, 102–104, and 128–131; these read GAAGRM, GTT, and SSNM. His160 acts as the Proton donor/acceptor in catalysis. His161 is a binding site for (S)-2,3,4,5-tetrahydrodipicolinate. The active-site Proton donor is Lys164. (S)-2,3,4,5-tetrahydrodipicolinate is bound at residue 170-171; it reads GT.

It belongs to the DapB family.

It localises to the cytoplasm. It carries out the reaction (S)-2,3,4,5-tetrahydrodipicolinate + NAD(+) + H2O = (2S,4S)-4-hydroxy-2,3,4,5-tetrahydrodipicolinate + NADH + H(+). The enzyme catalyses (S)-2,3,4,5-tetrahydrodipicolinate + NADP(+) + H2O = (2S,4S)-4-hydroxy-2,3,4,5-tetrahydrodipicolinate + NADPH + H(+). Its pathway is amino-acid biosynthesis; L-lysine biosynthesis via DAP pathway; (S)-tetrahydrodipicolinate from L-aspartate: step 4/4. Functionally, catalyzes the conversion of 4-hydroxy-tetrahydrodipicolinate (HTPA) to tetrahydrodipicolinate. This Methanobrevibacter smithii (strain ATCC 35061 / DSM 861 / OCM 144 / PS) protein is 4-hydroxy-tetrahydrodipicolinate reductase.